The sequence spans 447 residues: Tubulin beta-2 chain (447 aa).

Positions 11, 69, 138, 142, 143, 144, 204, and 226 each coordinate GTP. Glutamate 69 is a binding site for Mg(2+). Positions 419–447 are disordered; sequence VSEYQQYQDATADDEGEYEDEEEEADLQD. Residues 429–447 show a composition bias toward acidic residues; sequence TADDEGEYEDEEEEADLQD.

It belongs to the tubulin family. In terms of assembly, dimer of alpha and beta chains. A typical microtubule is a hollow water-filled tube with an outer diameter of 25 nm and an inner diameter of 15 nM. Alpha-beta heterodimers associate head-to-tail to form protofilaments running lengthwise along the microtubule wall with the beta-tubulin subunit facing the microtubule plus end conferring a structural polarity. Microtubules usually have 13 protofilaments but different protofilament numbers can be found in some organisms and specialized cells. Requires Mg(2+) as cofactor. As to expression, expressed in leaf sheaths and suspension cultured cells.

The protein resides in the cytoplasm. Its subcellular location is the cytoskeleton. Tubulin is the major constituent of microtubules, a cylinder consisting of laterally associated linear protofilaments composed of alpha- and beta-tubulin heterodimers. Microtubules grow by the addition of GTP-tubulin dimers to the microtubule end, where a stabilizing cap forms. Below the cap, tubulin dimers are in GDP-bound state, owing to GTPase activity of alpha-tubulin. This is Tubulin beta-2 chain (TUBB2) from Oryza sativa subsp. japonica (Rice).